The following is a 213-amino-acid chain: Probable nicotinate-nucleotide adenylyltransferase (213 aa).

It belongs to the NadD family.

The catalysed reaction is nicotinate beta-D-ribonucleotide + ATP + H(+) = deamido-NAD(+) + diphosphate. The protein operates within cofactor biosynthesis; NAD(+) biosynthesis; deamido-NAD(+) from nicotinate D-ribonucleotide: step 1/1. Catalyzes the reversible adenylation of nicotinate mononucleotide (NaMN) to nicotinic acid adenine dinucleotide (NaAD). In Salmonella gallinarum (strain 287/91 / NCTC 13346), this protein is Probable nicotinate-nucleotide adenylyltransferase.